We begin with the raw amino-acid sequence, 136 residues long: Glutaredoxin-C8 (136 aa).

Positions 33-135 (SSFVKSTVKA…KLLNIDVKED (103 aa)) constitute a Glutaredoxin domain. Residues Cys53 and Cys56 are joined by a disulfide bond.

It belongs to the glutaredoxin family. CPYC subfamily.

The protein resides in the cytoplasm. Functionally, has a glutathione-disulfide oxidoreductase activity in the presence of NADPH and glutathione reductase. Reduces low molecular weight disulfides and proteins. The protein is Glutaredoxin-C8 (GRXC8) of Oryza sativa subsp. japonica (Rice).